The primary structure comprises 324 residues: Putative divalent cation/proton antiporter TMEM165 (324 aa).

Positions 1-33 (MAAAAPGNGRASAPRLLLLFLVPLLWAPAAVRA) are cleaved as a signal peptide. The Lumenal segment spans residues 34–89 (GPDEDLSHRNKEPPAPAQQLQPQPVAVQGPEPARVEKIFTPAAPVHTNKEDPATQT). The segment covering 35–45 (PDEDLSHRNKE) has biased composition (basic and acidic residues). A disordered region spans residues 35-59 (PDEDLSHRNKEPPAPAQQLQPQPVA). Residues 50-59 (AQQLQPQPVA) are compositionally biased toward low complexity. Residues 90-110 (NLGFIHAFVAAISVIIVSELG) traverse the membrane as a helical segment. At 111-126 (DKTFFIAAIMAMRYNR) the chain is on the cytoplasmic side. A helical membrane pass occupies residues 127 to 147 (LTVLAGAMLALGLMTCLSVLF). The Lumenal portion of the chain corresponds to 148 to 151 (GYAT). A helical transmembrane segment spans residues 152 to 172 (TVIPRVYTYYVSTVLFAIFGI). At 173 to 228 (RMLREGLKMSPDEGQEELEEVQAELKKKDEEFQRTKLLNGPGDVETGTSITVPQKK) the chain is on the cytoplasmic side. Positions 184-211 (DEGQEELEEVQAELKKKDEEFQRTKLLN) form a coiled coil. A helical transmembrane segment spans residues 229 to 249 (WLHFISPIFVQALTLTFLAEW). At 250-267 (GDRSQLTTIVLAAREDPY) the chain is on the lumenal side. Residues 268-288 (GVAVGGTVGHCLCTGLAVIGG) traverse the membrane as a helical segment. The Cytoplasmic segment spans residues 289 to 299 (RMIAQKISVRT). Residues 300 to 320 (VTIIGGIVFLAFAFSALFISP) form a helical membrane-spanning segment. The Lumenal portion of the chain corresponds to 321–324 (DSGF).

The protein belongs to the GDT1 family. Ubiquitously expressed.

The protein localises to the golgi apparatus membrane. The catalysed reaction is Ca(2+)(in) + n H(+)(out) = Ca(2+)(out) + n H(+)(in). The enzyme catalyses Mn(2+)(in) + n H(+)(out) = Mn(2+)(out) + n H(+)(in). In terms of biological role, putative divalent cation:proton antiporter that exchanges calcium or manganese ions for protons across the Golgi membrane. Mediates the reversible transport of calcium or manganese to the Golgi lumen driven by the proton gradient and possibly the membrane potential generated by V-ATPase. Provides calcium or manganese cofactors to resident Golgi enzymes and contributes to the maintenance of an acidic luminal Golgi pH required for proper functioning of the secretory pathway. Promotes Ca(2+) storage within the Golgi lumen of the mammary epithelial cells to be then secreted into milk. The transport mechanism and stoichiometry remains to be elucidated. This Homo sapiens (Human) protein is Putative divalent cation/proton antiporter TMEM165.